Here is a 97-residue protein sequence, read N- to C-terminus: YcgL domain-containing protein PputW619_3899 (97 aa).

Residues 3 to 87 enclose the YcgL domain; the sequence is RICSIYKSPR…AEDEYIEHLP (85 aa).

The protein is YcgL domain-containing protein PputW619_3899 of Pseudomonas putida (strain W619).